Reading from the N-terminus, the 270-residue chain is tRNA pseudouridine synthase A (270 aa).

Residue D60 is the Nucleophile of the active site. The RNA binding stretch occupies residues 107–111; it reads FHARF. Residue Y118 coordinates substrate. The segment at 168-172 is interaction with tRNA; that stretch reads QCQSR.

The protein belongs to the tRNA pseudouridine synthase TruA family. As to quaternary structure, homodimer.

It catalyses the reaction uridine(38/39/40) in tRNA = pseudouridine(38/39/40) in tRNA. Functionally, formation of pseudouridine at positions 38, 39 and 40 in the anticodon stem and loop of transfer RNAs. The polypeptide is tRNA pseudouridine synthase A (Escherichia fergusonii (strain ATCC 35469 / DSM 13698 / CCUG 18766 / IAM 14443 / JCM 21226 / LMG 7866 / NBRC 102419 / NCTC 12128 / CDC 0568-73)).